The primary structure comprises 498 residues: ATP synthase subunit beta, chloroplastic (498 aa).

Residue 172 to 179 (GGAGVGKT) participates in ATP binding.

Belongs to the ATPase alpha/beta chains family. In terms of assembly, F-type ATPases have 2 components, CF(1) - the catalytic core - and CF(0) - the membrane proton channel. CF(1) has five subunits: alpha(3), beta(3), gamma(1), delta(1), epsilon(1). CF(0) has four main subunits: a(1), b(1), b'(1) and c(9-12).

Its subcellular location is the plastid. It localises to the chloroplast thylakoid membrane. It catalyses the reaction ATP + H2O + 4 H(+)(in) = ADP + phosphate + 5 H(+)(out). Produces ATP from ADP in the presence of a proton gradient across the membrane. The catalytic sites are hosted primarily by the beta subunits. This chain is ATP synthase subunit beta, chloroplastic, found in Platanus occidentalis (Sycamore).